Reading from the N-terminus, the 146-residue chain is uncharacterized protein (146 aa).

Residues 7-27 (FVLSITIVLVILIIIAFIWYN) form a helical membrane-spanning segment.

The protein belongs to the asfivirus E146L family.

Its subcellular location is the host membrane. It is found in the virion. This is an uncharacterized protein from Ornithodoros (relapsing fever ticks).